A 99-amino-acid polypeptide reads, in one-letter code: DNA-directed RNA polymerase subunit omega (99 aa).

The protein belongs to the RNA polymerase subunit omega family. In terms of assembly, the RNAP catalytic core consists of 2 alpha, 1 beta, 1 beta' and 1 omega subunit. When a sigma factor is associated with the core the holoenzyme is formed, which can initiate transcription.

The catalysed reaction is RNA(n) + a ribonucleoside 5'-triphosphate = RNA(n+1) + diphosphate. Its function is as follows. Promotes RNA polymerase assembly. Latches the N- and C-terminal regions of the beta' subunit thereby facilitating its interaction with the beta and alpha subunits. This is DNA-directed RNA polymerase subunit omega from Xylella fastidiosa (strain Temecula1 / ATCC 700964).